We begin with the raw amino-acid sequence, 295 residues long: MRHILNLYENINSTARNNSDCPAVILPEEIFFTVSIVGVLENLMVLLAVAKNKSLQSPMYFFICSLAISDMLGSLYKILENVLIMFRNMGYLEPRGSFESTADDVVDSLFILSLLGSICSLSVIAADRYITIFHALQYHSIVTMHRALVVLTVLWAGCTGSGITIVTFSHHVPTVIAFTALFPLMLAFILCLYVHMFLLARSHARRTSSLPKANMRGAITLTVLLGVFIFCWAPFVLHVLLMTFCPADPYCACYMSLFQVNGVLIMCNAVIDPFIYAFRSPELRVAFKKMVICNW.

Residues 1 to 23 (MRHILNLYENINSTARNNSDCPA) lie on the Extracellular side of the membrane. N-linked (GlcNAc...) asparagine glycosylation is found at N12 and N17. 2 disulfides stabilise this stretch: C21–C253 and C245–C251. Residues 24 to 49 (VILPEEIFFTVSIVGVLENLMVLLAV) traverse the membrane as a helical segment. Over 50 to 58 (AKNKSLQSP) the chain is Cytoplasmic. A helical transmembrane segment spans residues 59-79 (MYFFICSLAISDMLGSLYKIL). Over 80–104 (ENVLIMFRNMGYLEPRGSFESTADD) the chain is Extracellular. Residues 105–126 (VVDSLFILSLLGSICSLSVIAA) traverse the membrane as a helical segment. Over 127 to 147 (DRYITIFHALQYHSIVTMHRA) the chain is Cytoplasmic. The helical transmembrane segment at 148 to 168 (LVVLTVLWAGCTGSGITIVTF) threads the bilayer. Over 169 to 180 (SHHVPTVIAFTA) the chain is Extracellular. A helical membrane pass occupies residues 181–199 (LFPLMLAFILCLYVHMFLL). Over 200-217 (ARSHARRTSSLPKANMRG) the chain is Cytoplasmic. A helical transmembrane segment spans residues 218 to 244 (AITLTVLLGVFIFCWAPFVLHVLLMTF). The Extracellular portion of the chain corresponds to 245-256 (CPADPYCACYMS). A helical transmembrane segment spans residues 257 to 278 (LFQVNGVLIMCNAVIDPFIYAF). Topologically, residues 279-295 (RSPELRVAFKKMVICNW) are cytoplasmic. The S-palmitoyl cysteine moiety is linked to residue C293.

Belongs to the G-protein coupled receptor 1 family. In terms of assembly, homodimer. Interacts with corticotropin (ACTH). Interacts with MRAP; this interaction targets MC2R to the plasma membrane. Interacts with MRAP2; competing with MRAP for binding to MC2R and impairing the binding of corticotropin (ACTH). In terms of processing, ubiquitinated by MGRN1 that may be involved in post-endocytic trafficking and/or degradation of internalized receptor.

It localises to the cell membrane. In terms of biological role, hormone receptor primarily expressed in adrenal cortex that plays a key role in regulating adrenocortical function. Upon corticotropin (ACTH) binding, facilitates the release of adrenal glucocorticoids, including cortisol and corticosterone. In addition, MC2R is required for fetal and neonatal adrenal gland development. Mechanistically, activates adenylate cyclase (cAMP), the MAPK cascade as well as the cAMP-dependent protein kinase A pathway leading to steroidogenic factor 1/NR5A1-mediated transcriptional activation. The chain is Adrenocorticotropic hormone receptor (MC2R) from Ovis aries (Sheep).